Reading from the N-terminus, the 122-residue chain is Large ribosomal subunit protein uL14 (122 aa).

It belongs to the universal ribosomal protein uL14 family. Part of the 50S ribosomal subunit. Forms a cluster with proteins L3 and L19. In the 70S ribosome, L14 and L19 interact and together make contacts with the 16S rRNA in bridges B5 and B8.

Binds to 23S rRNA. Forms part of two intersubunit bridges in the 70S ribosome. The sequence is that of Large ribosomal subunit protein uL14 from Christiangramia forsetii (strain DSM 17595 / CGMCC 1.15422 / KT0803) (Gramella forsetii).